We begin with the raw amino-acid sequence, 559 residues long: Proton-coupled zinc antiporter SLC30A9, mitochondrial (559 aa).

Residues 58–96 (SSDQKEDGGSKGTSAASSPEKSMAGLDPSKPEQKSTFPP) form a disordered region. 5 consecutive transmembrane segments (helical) span residues 230–250 (VVIV…LAWV), 305–325 (GVGI…IGLL), 333–353 (LLWA…TLLV), 389–409 (AAAV…SLTG), and 415–435 (SLGS…LIYT). Residues 453–457 (LTELL) carry the LXXLL motif motif.

This sequence belongs to the cation diffusion facilitator (CDF) transporter (TC 2.A.4) family. SLC30A subfamily.

The protein resides in the mitochondrion membrane. Its subcellular location is the nucleus. It is found in the endoplasmic reticulum. It catalyses the reaction Zn(2+)(in) + 2 H(+)(out) = Zn(2+)(out) + 2 H(+)(in). In terms of biological role, mitochondrial proton-coupled zinc ion antiporter mediating the export of zinc from the mitochondria and involved in zinc homeostasis, zinc mobilization as well as mitochondrial morphology and health. In nucleus, may function as a secondary coactivator for nuclear receptors. The sequence is that of Proton-coupled zinc antiporter SLC30A9, mitochondrial (slc30a9) from Xenopus laevis (African clawed frog).